Here is a 2474-residue protein sequence, read N- to C-terminus: Highly reducing polyketide synthase 40 (2474 aa).

The region spanning 1-294 (MFKETEIQQR…GSNAHIIIDD (294 aa)) is the Ketosynthase family 3 (KS3) domain. Catalysis depends on for beta-ketoacyl synthase activity residues Cys-42, His-177, and His-217. One can recognise a Malonyl-CoA:ACP transacylase (MAT) domain in the interval 459–798 (FVFTGQGAQW…GYESVLRRGT (340 aa)). Positions 864 to 998 (HELLGAPVPD…GLVVTEYEQP (135 aa)) are N-terminal hotdog fold. One can recognise a PKS/mFAS DH domain in the interval 864–1182 (HELLGAPVPD…ITTVARSEGA (319 aa)). The active-site Proton acceptor; for dehydratase activity is His-896. Residues 1027–1182 (KVETSFRQLY…ITTVARSEGA (156 aa)) are C-terminal hotdog fold. The Proton donor; for dehydratase activity role is filled by Asp-1093. Residues 1232 to 1535 (VEMMCFLYIK…DLHIYDFPDH (304 aa)) form a methyltransferase (CMet) domain region. The Enoyl reductase (ER) domain occupies 1770–2063 (GLLDSLQFQD…SGSHMGKLVL (294 aa)). The Ketoreductase (KR) domain occupies 2087-2263 (ASYLLSGGLG…PGVAVDLGMI (177 aa)). One can recognise a Carrier domain in the interval 2385-2462 (DAAKIVSAAI…ELAELAAKRS (78 aa)). Ser-2422 is subject to O-(pantetheine 4'-phosphoryl)serine.

The cofactor is pantetheine 4'-phosphate.

The protein operates within secondary metabolite biosynthesis. Highly reducing polyketide synthase; part of the gene cluster that mediates the biosynthesis of the gamma-pyrones fusapyrone (FPY) and deoxyfusapyrone (dFPY). FPY is an undecaketide and thus likely synthesized by the polyketide synthase FPY1 from acetyl-CoA functioning as starter unit and the addition of 10 malonyl-CoA extender units by successive Claisen-condensations. Next to this, FPY shares some rare features: C-glycosylated 4-deoxyglucose at C-3, a gem-dimethyl group at C-13, and an alpha-beta to beta-gamma double bond shift at C-20. During FPY biosynthesis mono-C-methyl groups are transferred to the tetra-, penta-, hexa- and heptaketide, while two C-methyl groups are transferred to the nonaketide, suggesting that the CMet domain is programmed to selectively catalyze two successive C-alpha-methylation reactions of the nonaketide, while other alpha-carbons are non- or mono-methylated only. While the origin of the 4'-deoxyglucose moiety remains opaque, its transfer to C-3 is most likely mediated by the C-glycosyltransferase FPY2. Next to this, the hydroxyl group present at C-33 and discriminating between FPY and dFPY, is likely to be installed by the cytochrome P450 monooxygenase FPY7. No putative function can be predicted for the remaining genes FPY3-FPY6. The sequence is that of Highly reducing polyketide synthase 40 from Fusarium mangiferae (Mango malformation disease fungus).